Reading from the N-terminus, the 131-residue chain is Aspartate 1-decarboxylase (131 aa).

The active-site Schiff-base intermediate with substrate; via pyruvic acid is the Ser-25. Ser-25 carries the post-translational modification Pyruvic acid (Ser). A substrate-binding site is contributed by Thr-57. Residue Tyr-58 is the Proton donor of the active site. 73-75 contributes to the substrate binding site; sequence GAA.

It belongs to the PanD family. In terms of assembly, heterooctamer of four alpha and four beta subunits. Pyruvate is required as a cofactor. In terms of processing, is synthesized initially as an inactive proenzyme, which is activated by self-cleavage at a specific serine bond to produce a beta-subunit with a hydroxyl group at its C-terminus and an alpha-subunit with a pyruvoyl group at its N-terminus.

The protein resides in the cytoplasm. The catalysed reaction is L-aspartate + H(+) = beta-alanine + CO2. It participates in cofactor biosynthesis; (R)-pantothenate biosynthesis; beta-alanine from L-aspartate: step 1/1. Catalyzes the pyruvoyl-dependent decarboxylation of aspartate to produce beta-alanine. The chain is Aspartate 1-decarboxylase from Anaeromyxobacter sp. (strain Fw109-5).